The following is a 476-amino-acid chain: Serine/threonine-protein kinase Chk1 (476 aa).

The segment at 1 to 265 (MAVPFVEDWD…IPDIKKDRWY (265 aa)) is interaction with CLSPN. Residues 9–265 (WDLVQTLGEG…IPDIKKDRWY (257 aa)) form the Protein kinase domain. ATP is bound by residues 15 to 23 (LGEGAYGEV) and K38. Residue D130 is the Proton acceptor of the active site. Residue K132 forms a Glycyl lysine isopeptide (Lys-Gly) (interchain with G-Cter in ubiquitin) linkage. The segment at 270–327 (KKGAKRPRVTSGGVSESPSGFSKHIQSNLDFSPVNSASSEENVKYSSSQPEPRTGLSL) is disordered. 4 positions are modified to phosphoserine: S280, S286, S296, and S301. Residues 281–320 (GGVSESPSGFSKHIQSNLDFSPVNSASSEENVKYSSSQPE) show a composition bias toward polar residues. At S317 the chain carries Phosphoserine; by ATM and ATR. S331 carries the post-translational modification Phosphoserine. The residue at position 345 (S345) is a Phosphoserine; by ATM and ATR. Positions 391-476 (QCLKETCEKL…SSQKIWLPAT (86 aa)) are autoinhibitory region. K436 participates in a covalent cross-link: Glycyl lysine isopeptide (Lys-Gly) (interchain with G-Cter in ubiquitin). Phosphoserine is present on residues S467 and S468.

Belongs to the protein kinase superfamily. CAMK Ser/Thr protein kinase family. NIM1 subfamily. Interacts (phosphorylated by ATR) with RAD51. Interacts with and phosphorylates CLSPN, an adapter protein that regulates the ATR-dependent phosphorylation of CHEK1. Interacts with BRCA1. Interacts with and phosphorylates CDC25A, CDC25B and CDC25C. Interacts with FBXO6, which regulates CHEK1. Interacts with PPM1D, which regulates CHEK1 through dephosphorylation. Interacts with TIMELESS; DNA damage-dependent. Interacts with FEM1B; activates CHEK1 in response to stress. Interacts with TLK1. Interacts with XPO1 and YWHAZ. Interacts with CDK5RAP3; antagonizes CHEK1. In terms of assembly, isoform 1 associates with isoform 2, the interaction is disrupted upon phosphorylation by ATR. Post-translationally, phosphorylated by ATR in a RAD17-dependent manner in response to ultraviolet irradiation and inhibition of DNA replication. Phosphorylated by ATM in response to ionizing irradiation. ATM and ATR can both phosphorylate Ser-317 and Ser-345 and this results in enhanced kinase activity. Phosphorylation at Ser-345 induces a change in the conformation of the protein, activates the kinase activity and is a prerequisite for interaction with FBXO6 and subsequent ubiquitination at Lys-436. Phosphorylation at Ser-345 also increases binding to 14-3-3 proteins and promotes nuclear retention. Conversely, dephosphorylation at Ser-345 by PPM1D may contribute to exit from checkpoint mediated cell cycle arrest. Phosphorylation at Ser-280 by AKT1/PKB, may promote mono and/or diubiquitination. Also phosphorylated at undefined residues during mitotic arrest, resulting in decreased activity. Ubiquitinated. Mono or diubiquitination promotes nuclear exclusion. The activated form (phosphorylated on Ser-345) is polyubiquitinated at Lys-436 by some SCF-type E3 ubiquitin ligase complex containing FBXO6 promoting its degradation. Ubiquitination and degradation are required to terminate the checkpoint and ensure that activated CHEK1 does not accumulate as cells progress through S phase, when replication forks encounter transient impediments during normal DNA replication. 'Lys-63'-mediated ubiquitination by TRAF4 at Lys-132 activates cell cycle arrest and activation of DNA repair. In terms of processing, proteolytically cleaved at the C-terminus by SPRTN during normal DNA replication, thereby promoting CHEK1 removal from chromatin and activating the protein kinase activity. As to expression, expressed ubiquitously with the most abundant expression in thymus, testis, small intestine and colon.

It localises to the nucleus. The protein resides in the chromosome. Its subcellular location is the cytoplasm. The protein localises to the cytoskeleton. It is found in the microtubule organizing center. It localises to the centrosome. It carries out the reaction L-seryl-[protein] + ATP = O-phospho-L-seryl-[protein] + ADP + H(+). It catalyses the reaction L-threonyl-[protein] + ATP = O-phospho-L-threonyl-[protein] + ADP + H(+). Its activity is regulated as follows. Activated through phosphorylation predominantly by ATR but also by ATM in response to DNA damage or inhibition of DNA replication. Activation is modulated by several mediators including CLSPN, BRCA1 and FEM1B. Proteolytic cleavage at the C-terminus by SPRTN during normal DNA replication activates the protein kinase activity. Functionally, serine/threonine-protein kinase which is required for checkpoint-mediated cell cycle arrest and activation of DNA repair in response to the presence of DNA damage or unreplicated DNA. May also negatively regulate cell cycle progression during unperturbed cell cycles. This regulation is achieved by a number of mechanisms that together help to preserve the integrity of the genome. Recognizes the substrate consensus sequence [R-X-X-S/T]. Binds to and phosphorylates CDC25A, CDC25B and CDC25C. Phosphorylation of CDC25A at 'Ser-178' and 'Thr-507' and phosphorylation of CDC25C at 'Ser-216' creates binding sites for 14-3-3 proteins which inhibit CDC25A and CDC25C. Phosphorylation of CDC25A at 'Ser-76', 'Ser-124', 'Ser-178', 'Ser-279' and 'Ser-293' promotes proteolysis of CDC25A. Phosphorylation of CDC25A at 'Ser-76' primes the protein for subsequent phosphorylation at 'Ser-79', 'Ser-82' and 'Ser-88' by NEK11, which is required for polyubiquitination and degradation of CDCD25A. Inhibition of CDC25 leads to increased inhibitory tyrosine phosphorylation of CDK-cyclin complexes and blocks cell cycle progression. Also phosphorylates NEK6. Binds to and phosphorylates RAD51 at 'Thr-309', which promotes the release of RAD51 from BRCA2 and enhances the association of RAD51 with chromatin, thereby promoting DNA repair by homologous recombination. Phosphorylates multiple sites within the C-terminus of TP53, which promotes activation of TP53 by acetylation and promotes cell cycle arrest and suppression of cellular proliferation. Also promotes repair of DNA cross-links through phosphorylation of FANCE. Binds to and phosphorylates TLK1 at 'Ser-743', which prevents the TLK1-dependent phosphorylation of the chromatin assembly factor ASF1A. This may enhance chromatin assembly both in the presence or absence of DNA damage. May also play a role in replication fork maintenance through regulation of PCNA. May regulate the transcription of genes that regulate cell-cycle progression through the phosphorylation of histones. Phosphorylates histone H3.1 (to form H3T11ph), which leads to epigenetic inhibition of a subset of genes. May also phosphorylate RB1 to promote its interaction with the E2F family of transcription factors and subsequent cell cycle arrest. Phosphorylates SPRTN, promoting SPRTN recruitment to chromatin. Reduces replication stress and activates the G2/M checkpoint, by phosphorylating and inactivating PABIR1/FAM122A and promoting the serine/threonine-protein phosphatase 2A-mediated dephosphorylation and stabilization of WEE1 levels and activity. In terms of biological role, endogenous repressor of isoform 1, interacts with, and antagonizes CHK1 to promote the S to G2/M phase transition. This is Serine/threonine-protein kinase Chk1 (CHEK1) from Homo sapiens (Human).